The primary structure comprises 739 residues: Poly(A) polymerase gamma (739 aa).

Lys2 is modified (N6-acetyllysine). Position 23 is a phosphoserine (Ser23). Residues 99–101 (FGS), Thr108, 112–114 (DID), Asp166, Lys227, Tyr236, and 245–246 (GV) each bind ATP. Mg(2+)-binding residues include Asp112, Asp114, and Asp166. The interval 506-566 (KSLSDVSRSS…PTGEIERSSA (61 aa)) is disordered. 2 stretches are compositionally biased toward polar residues: residues 509–531 (SDVS…TCLD) and 538–556 (SGTP…NPDS). Ser524 is modified (phosphoserine). A phosphoserine mark is found at Ser602 and Ser651. Thr657 bears the Phosphothreonine mark. Over residues 677-688 (SRAAEDRKRKPM) the composition is skewed to basic and acidic residues. Positions 677-725 (SRAAEDRKRKPMDSIGGESMPIPTIDTARKKRLPSKELPDSSSPVPANN) are disordered. Ser711 carries the phosphoserine modification.

It belongs to the poly(A) polymerase family. Mg(2+) serves as cofactor. The cofactor is Mn(2+).

The protein resides in the nucleus. The catalysed reaction is RNA(n) + ATP = RNA(n)-3'-adenine ribonucleotide + diphosphate. Responsible for the post-transcriptional adenylation of the 3'-terminal of mRNA precursors and several small RNAs including signal recognition particle (SRP) RNA, nuclear 7SK RNA, U2 small nuclear RNA, and ribosomal 5S RNA. This chain is Poly(A) polymerase gamma (Papolg), found in Mus musculus (Mouse).